We begin with the raw amino-acid sequence, 238 residues long: Ribonuclease PH (238 aa).

Residues Arg-86 and 124-126 (GTR) each bind phosphate.

Belongs to the RNase PH family. As to quaternary structure, homohexameric ring arranged as a trimer of dimers.

It carries out the reaction tRNA(n+1) + phosphate = tRNA(n) + a ribonucleoside 5'-diphosphate. Phosphorolytic 3'-5' exoribonuclease that plays an important role in tRNA 3'-end maturation. Removes nucleotide residues following the 3'-CCA terminus of tRNAs; can also add nucleotides to the ends of RNA molecules by using nucleoside diphosphates as substrates, but this may not be physiologically important. Probably plays a role in initiation of 16S rRNA degradation (leading to ribosome degradation) during starvation. This is Ribonuclease PH from Psychrobacter sp. (strain PRwf-1).